The primary structure comprises 224 residues: Proteasome subunit beta (224 aa).

A propeptide spans 1–6 (removed in mature form; by autocatalysis); the sequence is MDVMKG. Catalysis depends on T7, which acts as the Nucleophile.

This sequence belongs to the peptidase T1B family. The 20S proteasome core is composed of 14 alpha and 14 beta subunits that assemble into four stacked heptameric rings, resulting in a barrel-shaped structure. The two inner rings, each composed of seven catalytic beta subunits, are sandwiched by two outer rings, each composed of seven alpha subunits. The catalytic chamber with the active sites is on the inside of the barrel. Has a gated structure, the ends of the cylinder being occluded by the N-termini of the alpha-subunits. Is capped at one or both ends by the proteasome regulatory ATPase, PAN.

It localises to the cytoplasm. It catalyses the reaction Cleavage of peptide bonds with very broad specificity.. The formation of the proteasomal ATPase PAN-20S proteasome complex, via the docking of the C-termini of PAN into the intersubunit pockets in the alpha-rings, triggers opening of the gate for substrate entry. Interconversion between the open-gate and close-gate conformations leads to a dynamic regulation of the 20S proteasome proteolysis activity. In terms of biological role, component of the proteasome core, a large protease complex with broad specificity involved in protein degradation. This is Proteasome subunit beta from Methanocaldococcus sp. (strain FS406-22).